Here is a 159-residue protein sequence, read N- to C-terminus: Ribosomal RNA large subunit methyltransferase H (159 aa).

Residues Gly-108 and 127-132 contribute to the S-adenosyl-L-methionine site; that span reads FSKMTF.

This sequence belongs to the RNA methyltransferase RlmH family. In terms of assembly, homodimer.

It localises to the cytoplasm. The catalysed reaction is pseudouridine(1915) in 23S rRNA + S-adenosyl-L-methionine = N(3)-methylpseudouridine(1915) in 23S rRNA + S-adenosyl-L-homocysteine + H(+). In terms of biological role, specifically methylates the pseudouridine at position 1915 (m3Psi1915) in 23S rRNA. This Clostridium beijerinckii (strain ATCC 51743 / NCIMB 8052) (Clostridium acetobutylicum) protein is Ribosomal RNA large subunit methyltransferase H.